We begin with the raw amino-acid sequence, 986 residues long: Ephrin type-A receptor 4 (986 aa).

A signal peptide spans 1-19; it reads MAGIFYFILFSFLFGICDA. Residues 20-547 lie on the Extracellular side of the membrane; that stretch reads VTGSRVYPAN…RIIGDGANST (528 aa). Residues 30-209 enclose the Eph LBD domain; sequence EVTLLDSRSV…FYKKCPLTVR (180 aa). Asparagine 235, asparagine 340, and asparagine 408 each carry an N-linked (GlcNAc...) asparagine glycan. Fibronectin type-III domains are found at residues 328–439 and 440–537; these read PPSA…TNQA and APSS…TVPS. A helical membrane pass occupies residues 548 to 569; it reads VLLVSVSGSVVLVVILIAAFVI. Over 570–986 the chain is Cytoplasmic; it reads SRRRSKYSKA…QQMHGRMVPV (417 aa). Tyrosine 596 and tyrosine 602 each carry phosphotyrosine; by autocatalysis. The Protein kinase domain maps to 621–882; that stretch reads IKIEKVIGVG…QIVNMLDKLI (262 aa). Residues 627–635 and lysine 653 each bind ATP; that span reads IGVGEFGEV. The active-site Proton acceptor is aspartate 746. 2 positions are modified to phosphotyrosine; by autocatalysis: tyrosine 779 and tyrosine 928. Positions 911–975 constitute an SAM domain; the sequence is SAVVSVGDWL…LSSVQAMRTQ (65 aa). The PDZ-binding motif lies at 984-986; it reads VPV.

This sequence belongs to the protein kinase superfamily. Tyr protein kinase family. Ephrin receptor subfamily. In terms of assembly, heterotetramer upon binding of the ligand. The heterotetramer is composed of an ephrin dimer and a receptor dimer. Oligomerization is probably required to induce biological responses. Interacts (phosphorylated at position Tyr-602) with FYN. Interacts (via PDZ motif) with SIPA1L1 (via PDZ domain); controls neuronal morphology through regulation of the RAP1 (RAP1A or RAP1B) and RAP2 (RAP2A, RAP2B or RAP2C) GTPases. Interacts with CDK5, CDK5R1 and NGEF; upon activation by EFNA1 induces NGEF phosphorylation by the kinase CDK5. Interacts with CHN1; effector of EPHA4 in axon guidance linking EPHA4 activation to RAC1 regulation. Forms a ternary complex composed of ADAM10, CADH1 and EPHA4; within the complex, CADH1 is cleaved by ADAM10 which disrupts adherens junctions. Expressed in inner and outer pillar cells of the organ of Corti (at protein level). Highest expression in the adult brain and retina and also detectable in kidney, lung, skeletal muscle and thymus. Not detected in heart and liver. Expressed in myogenic progenitor cells.

It localises to the cell membrane. It is found in the cell projection. Its subcellular location is the axon. The protein localises to the dendrite. The protein resides in the postsynaptic density membrane. It localises to the early endosome. It is found in the cell junction. Its subcellular location is the adherens junction. It catalyses the reaction L-tyrosyl-[protein] + ATP = O-phospho-L-tyrosyl-[protein] + ADP + H(+). Its function is as follows. Receptor tyrosine kinase which binds membrane-bound ephrin family ligands residing on adjacent cells, leading to contact-dependent bidirectional signaling into neighboring cells. The signaling pathway downstream of the receptor is referred to as forward signaling while the signaling pathway downstream of the ephrin ligand is referred to as reverse signaling. Highly promiscuous, it has the unique property among Eph receptors to bind and to be physiologically activated by both GPI-anchored ephrin-A and transmembrane ephrin-B ligands including EFNA1 and EFNB3. Upon activation by ephrin ligands, modulates cell morphology and integrin-dependent cell adhesion through regulation of the Rac, Rap and Rho GTPases activity. Plays an important role in the development of the nervous system controlling different steps of axonal guidance including the establishment of the corticospinal projections. May also control the segregation of motor and sensory axons during neuromuscular circuit developmen. In addition to its role in axonal guidance plays a role in synaptic plasticity. Activated by EFNA1 phosphorylates CDK5 at 'Tyr-15' which in turn phosphorylates NGEF regulating RHOA and dendritic spine morphogenesis. In the nervous system, also plays a role in repair after injury preventing axonal regeneration and in angiogenesis playing a role in central nervous system vascular formation. Additionally, its promiscuity makes it available to participate in a variety of cell-cell signaling regulating for instance the development of the thymic epithelium. During development of the cochlear organ of Corti, regulates pillar cell separation by forming a ternary complex with ADAM10 and CADH1 which facilitates the cleavage of CADH1 by ADAM10 and disruption of adherens junctions. Phosphorylates CAPRIN1, promoting CAPRIN1-dependent formation of a membraneless compartment. The protein is Ephrin type-A receptor 4 (Epha4) of Mus musculus (Mouse).